We begin with the raw amino-acid sequence, 857 residues long: Linoleate 9S-lipoxygenase 6 (857 aa).

In terms of domain architecture, PLAT spans asparagine 26–alanine 156. Residues proline 159–isoleucine 857 enclose the Lipoxygenase domain. Residues asparagine 205–glutamate 243 are disordered. Residues glutamine 208–glycine 218 are compositionally biased toward polar residues. Residues histidine 518, histidine 523, histidine 709, asparagine 713, and isoleucine 857 each contribute to the Fe cation site.

The protein belongs to the lipoxygenase family. As to quaternary structure, monomer. Requires Fe cation as cofactor. In terms of tissue distribution, expressed in tubers and roots. Detected in leaves, petioles and stems.

It localises to the cytoplasm. The enzyme catalyses (9Z,12Z)-octadecadienoate + O2 = (9S)-hydroperoxy-(10E,12Z)-octadecadienoate. The protein operates within lipid metabolism; oxylipin biosynthesis. In terms of biological role, plant lipoxygenases may be involved in a number of diverse aspects of plant physiology including growth and development, pest resistance, and senescence or responses to wounding. Catalyzes the hydroperoxidation of lipids containing a cis,cis-1,4-pentadiene structure. Linoleic and linolenic acids are the preferred substrates, but is also active with arachidonic acid. The products are almost exclusively the S enantiomers. In Solanum tuberosum (Potato), this protein is Linoleate 9S-lipoxygenase 6 (LOX1.6).